The chain runs to 108 residues: UPF0145 protein SYNPCC7002_A1337 (108 aa).

It belongs to the UPF0145 family.

In Picosynechococcus sp. (strain ATCC 27264 / PCC 7002 / PR-6) (Agmenellum quadruplicatum), this protein is UPF0145 protein SYNPCC7002_A1337.